A 177-amino-acid polypeptide reads, in one-letter code: Large ribosomal subunit protein uL6 (177 aa).

This sequence belongs to the universal ribosomal protein uL6 family. In terms of assembly, part of the 50S ribosomal subunit.

Its function is as follows. This protein binds to the 23S rRNA, and is important in its secondary structure. It is located near the subunit interface in the base of the L7/L12 stalk, and near the tRNA binding site of the peptidyltransferase center. The protein is Large ribosomal subunit protein uL6 of Micrococcus luteus (strain ATCC 4698 / DSM 20030 / JCM 1464 / CCM 169 / CCUG 5858 / IAM 1056 / NBRC 3333 / NCIMB 9278 / NCTC 2665 / VKM Ac-2230) (Micrococcus lysodeikticus).